A 434-amino-acid chain; its full sequence is 5'-deoxyadenosine deaminase (434 aa).

The Zn(2+) site is built by His63 and His65. Positions 92 and 184 each coordinate substrate. His211 contributes to the Zn(2+) binding site. The substrate site is built by Glu214 and Asp299. Asp299 provides a ligand contact to Zn(2+).

It belongs to the metallo-dependent hydrolases superfamily. MTA/SAH deaminase family. As to quaternary structure, homotetramer. Zn(2+) serves as cofactor.

The enzyme catalyses 5'-deoxyadenosine + H2O + H(+) = 5'-deoxyinosine + NH4(+). It carries out the reaction S-adenosyl-L-homocysteine + H2O + H(+) = S-inosyl-L-homocysteine + NH4(+). The catalysed reaction is S-methyl-5'-thioadenosine + H2O + H(+) = S-methyl-5'-thioinosine + NH4(+). It catalyses the reaction adenosine + H2O + H(+) = inosine + NH4(+). It functions in the pathway amino-acid biosynthesis; S-adenosyl-L-methionine biosynthesis. In terms of biological role, catalyzes the deamination of three SAM-derived enzymatic products, namely 5'-deoxyadenosine, S-adenosyl-L-homocysteine, and 5'-methylthioadenosine, to produce the inosine analogs. Can also deaminate adenosine. The preferred substrate for this enzyme is 5'-deoxyadenosine, but all these substrates are efficiently deaminated. Likely functions in a S-adenosyl-L-methionine (SAM) recycling pathway from S-adenosyl-L-homocysteine (SAH) produced from SAM-dependent methylation reactions. May also be involved in the recycling of 5'-deoxyadenosine, whereupon the 5'-deoxyribose moiety of 5'-deoxyinosine is further metabolized to deoxyhexoses used for the biosynthesis of aromatic amino acids in methanogens. This chain is 5'-deoxyadenosine deaminase, found in Methanococcoides burtonii (strain DSM 6242 / NBRC 107633 / OCM 468 / ACE-M).